A 161-amino-acid polypeptide reads, in one-letter code: MRKFLSKTHHHTNPLWRVYRLVKFSKVFKNVIIIEFSKFIPSMVLKRHIYKQLLNINIGNQSSIAYKVMLDIFYPELITIGSNSVIGYNVTILTHEALVDEFRYGPVTIGSNTLIGANATILPGITIGDNVKVAAGTVVSKDIPDNGFAYGNPMYIKMIRR.

It belongs to the transferase hexapeptide repeat family.

This is Putative acetyltransferase SAV0762 from Staphylococcus aureus (strain Mu50 / ATCC 700699).